The following is a 639-amino-acid chain: Threonine--tRNA ligase (639 aa).

The TGS domain occupies 1-61 (MIKVALKDGS…DTDCDLNLFK (61 aa)). A catalytic region spans residues 242 to 532 (DHRKLGKELG…LIEHYAGKFP (291 aa)). Residues Cys333, His384, and His509 each contribute to the Zn(2+) site.

This sequence belongs to the class-II aminoacyl-tRNA synthetase family. In terms of assembly, homodimer. Requires Zn(2+) as cofactor.

It is found in the cytoplasm. It catalyses the reaction tRNA(Thr) + L-threonine + ATP = L-threonyl-tRNA(Thr) + AMP + diphosphate + H(+). In terms of biological role, catalyzes the attachment of threonine to tRNA(Thr) in a two-step reaction: L-threonine is first activated by ATP to form Thr-AMP and then transferred to the acceptor end of tRNA(Thr). Also edits incorrectly charged L-seryl-tRNA(Thr). This is Threonine--tRNA ligase from Clostridioides difficile (strain 630) (Peptoclostridium difficile).